A 1407-amino-acid chain; its full sequence is JmjC domain-containing histone demethylation protein 1 (1407 aa).

Disordered stretches follow at residues 1–86 and 98–151; these read MISA…SSTI and PTFT…NAFS. 2 stretches are compositionally biased toward basic and acidic residues: residues 55–67 and 125–140; these read DHVR…KRPS and PVER…RDES. Residues 141-150 are compositionally biased toward polar residues; it reads SYTQHRSNAF. The PHD-type zinc finger occupies 323–382; the sequence is QASCATCNLVRIPVDNEDQDVTWISCDGCKRWFHIVCAGFKNDRETRTVDKFICKTCRPI. The JmjC domain maps to 577-735; sequence VSQSKLGRLI…MQIKIAKIEK (159 aa). A substrate-binding site is contributed by T628. Residues H631 and D633 each coordinate Fe cation. K648 contributes to the substrate binding site. H703 is a binding site for Fe cation. Disordered regions lie at residues 893 to 987, 1004 to 1027, 1122 to 1183, and 1252 to 1389; these read KLSL…LGPK, KEEN…HHTP, IKAQ…QDSV, and DEMD…SLRL. 2 stretches are compositionally biased toward basic and acidic residues: residues 896-914 and 928-938; these read LAEK…RNAD and LSERPAVDIQK. Positions 1008-1027 are enriched in polar residues; it reads NGASGSQMTVSTSSLGHHTP. Over residues 1254-1264 the composition is skewed to basic and acidic residues; that stretch reads MDIHDQVDAGG. The segment covering 1273-1284 has biased composition (low complexity); sequence PSSGSRQSSRQP. The segment covering 1285 to 1296 has biased composition (basic and acidic residues); that stretch reads RQVERYMPEVHF. Residues 1297 to 1349 show a composition bias toward low complexity; that stretch reads AKTAKSTTTTPQTTRRSSFGSSGRKTTPGLSSGSKKSGSRPSSSHGKKSLSPS.

It belongs to the JHDM1 histone demethylase family. The cofactor is Fe(2+).

The protein localises to the nucleus. The enzyme catalyses N(6),N(6)-dimethyl-L-lysyl(36)-[histone H3] + 2 2-oxoglutarate + 2 O2 = L-lysyl(36)-[histone H3] + 2 formaldehyde + 2 succinate + 2 CO2. Its function is as follows. Histone demethylase that specifically demethylates 'Lys-36' of histone H3, thereby playing a central role in histone code. The polypeptide is JmjC domain-containing histone demethylation protein 1 (jhd1) (Emericella nidulans (strain FGSC A4 / ATCC 38163 / CBS 112.46 / NRRL 194 / M139) (Aspergillus nidulans)).